The primary structure comprises 119 residues: Holo-[acyl-carrier-protein] synthase (119 aa).

The Mg(2+) site is built by Asp-8 and Glu-58.

It belongs to the P-Pant transferase superfamily. AcpS family. It depends on Mg(2+) as a cofactor.

The protein localises to the cytoplasm. The catalysed reaction is apo-[ACP] + CoA = holo-[ACP] + adenosine 3',5'-bisphosphate + H(+). Its function is as follows. Transfers the 4'-phosphopantetheine moiety from coenzyme A to a Ser of acyl-carrier-protein. The polypeptide is Holo-[acyl-carrier-protein] synthase (Streptococcus mutans serotype c (strain ATCC 700610 / UA159)).